The following is a 281-amino-acid chain: Ribosomal RNA small subunit methyltransferase A (281 aa).

6 residues coordinate S-adenosyl-L-methionine: asparagine 25, leucine 27, glycine 52, glutamate 73, aspartate 99, and asparagine 118.

Belongs to the class I-like SAM-binding methyltransferase superfamily. rRNA adenine N(6)-methyltransferase family. RsmA subfamily.

The protein localises to the cytoplasm. The catalysed reaction is adenosine(1518)/adenosine(1519) in 16S rRNA + 4 S-adenosyl-L-methionine = N(6)-dimethyladenosine(1518)/N(6)-dimethyladenosine(1519) in 16S rRNA + 4 S-adenosyl-L-homocysteine + 4 H(+). Its function is as follows. Specifically dimethylates two adjacent adenosines (A1518 and A1519) in the loop of a conserved hairpin near the 3'-end of 16S rRNA in the 30S particle. May play a critical role in biogenesis of 30S subunits. The protein is Ribosomal RNA small subunit methyltransferase A of Erythrobacter litoralis (strain HTCC2594).